Here is a 233-residue protein sequence, read N- to C-terminus: MPKLVFARHGESEWNLANLFTGWADVDLSENGTKQAIEAGKLIKEAGIEFDIAYTSVLKRAIKTTNLALEFSDQLWVPVVKSWRLNERHYGGLTGLNKADAAAKHGDEQVHIWRRSYDVLPPAMDHDDKYTAHGDRRYAGLEDSLIPDAENLKVTLERALPFWEDQIAPALKEGKNVFVGAHGNSIRALVKQIKKLSDDEIMDVEIPNFPPLVFEFDDNLNVQNEYYLAPKKA.

Residues 8 to 15 (RHGESEWN), 21 to 22 (TG), Arg60, 87 to 90 (ERHY), Lys98, 114 to 115 (RR), and 183 to 184 (GN) contribute to the substrate site. His9 serves as the catalytic Tele-phosphohistidine intermediate. Glu87 functions as the Proton donor/acceptor in the catalytic mechanism.

The protein belongs to the phosphoglycerate mutase family. BPG-dependent PGAM subfamily.

It carries out the reaction (2R)-2-phosphoglycerate = (2R)-3-phosphoglycerate. Its pathway is carbohydrate degradation; glycolysis; pyruvate from D-glyceraldehyde 3-phosphate: step 3/5. Its function is as follows. Catalyzes the interconversion of 2-phosphoglycerate and 3-phosphoglycerate. The sequence is that of 2,3-bisphosphoglycerate-dependent phosphoglycerate mutase from Lactococcus lactis subsp. cremoris (strain MG1363).